The primary structure comprises 448 residues: Probable glycine dehydrogenase (decarboxylating) subunit 1 (448 aa).

It belongs to the GcvP family. N-terminal subunit subfamily. The glycine cleavage system is composed of four proteins: P, T, L and H. In this organism, the P 'protein' is a heterodimer of two subunits.

The enzyme catalyses N(6)-[(R)-lipoyl]-L-lysyl-[glycine-cleavage complex H protein] + glycine + H(+) = N(6)-[(R)-S(8)-aminomethyldihydrolipoyl]-L-lysyl-[glycine-cleavage complex H protein] + CO2. Its function is as follows. The glycine cleavage system catalyzes the degradation of glycine. The P protein binds the alpha-amino group of glycine through its pyridoxal phosphate cofactor; CO(2) is released and the remaining methylamine moiety is then transferred to the lipoamide cofactor of the H protein. This chain is Probable glycine dehydrogenase (decarboxylating) subunit 1, found in Rhodospirillum rubrum (strain ATCC 11170 / ATH 1.1.1 / DSM 467 / LMG 4362 / NCIMB 8255 / S1).